The following is a 393-amino-acid chain: MKIYFDENMPFAKEFFSELCHLNNGIDGEEQGELVPFSGRTLTAAQVADADVLLVRSITQVNEQLLHLNDKISFVGSATIGTDHIDLSYLAKRNITFQSAPGCNAISVAEYVLSALVVLAERYLLTLSSLTVGIVGGGNTGTRLSEKLTALGIQHKICDPLLAEKQKQDKSHPPTDQRHYVPLVDVLACDVISLHVPKVVGGEHPTNKLINAENLALLREDQILISACRGDVIDNHALLALKTAGHGVKIVLDVWQGEPDVLEALIPYTEIATAHIAGYSLEGKARGSEMLYQALCQQLAITPKYQLANFLPSASIPAIEINQDFNQILLNQLVKMVYDVRRDDAIFRQQLFVQGFDSLRKNYPVRREFSAVTVNLSSTTYSDVPHRLGFNKN.

Substrate contacts are provided by Ser-57 and Thr-79. Asp-159 contributes to the NAD(+) binding site. The active site involves Arg-229. Position 253 (Asp-253) interacts with NAD(+). Glu-258 is a catalytic residue. The active-site Proton donor is the His-275. Gly-278 is a binding site for NAD(+). Tyr-279 contacts substrate.

The protein belongs to the D-isomer specific 2-hydroxyacid dehydrogenase family. PdxB subfamily. In terms of assembly, homodimer.

The protein localises to the cytoplasm. The catalysed reaction is 4-phospho-D-erythronate + NAD(+) = (R)-3-hydroxy-2-oxo-4-phosphooxybutanoate + NADH + H(+). It participates in cofactor biosynthesis; pyridoxine 5'-phosphate biosynthesis; pyridoxine 5'-phosphate from D-erythrose 4-phosphate: step 2/5. Functionally, catalyzes the oxidation of erythronate-4-phosphate to 3-hydroxy-2-oxo-4-phosphonooxybutanoate. The sequence is that of Erythronate-4-phosphate dehydrogenase from Colwellia psychrerythraea (strain 34H / ATCC BAA-681) (Vibrio psychroerythus).